Here is a 379-residue protein sequence, read N- to C-terminus: tRNA-specific 2-thiouridylase MnmA (379 aa).

ATP is bound by residues 6 to 13 (AMSGGVDS) and L32. C101 (nucleophile) is an active-site residue. A disulfide bridge links C101 with C199. An ATP-binding site is contributed by G125. Residues 148–150 (KDQ) are interaction with tRNA. C199 functions as the Cysteine persulfide intermediate in the catalytic mechanism.

It belongs to the MnmA/TRMU family.

Its subcellular location is the cytoplasm. It carries out the reaction S-sulfanyl-L-cysteinyl-[protein] + uridine(34) in tRNA + AH2 + ATP = 2-thiouridine(34) in tRNA + L-cysteinyl-[protein] + A + AMP + diphosphate + H(+). In terms of biological role, catalyzes the 2-thiolation of uridine at the wobble position (U34) of tRNA, leading to the formation of s(2)U34. The polypeptide is tRNA-specific 2-thiouridylase MnmA (Arthrobacter sp. (strain FB24)).